The following is a 166-amino-acid chain: MAASVTVIGIDPGSQCTGWGIVREASGVLTLVDCGAIRPKGGDFAARLGDLYRQLADVVRAHTPDEAAVEDVHAAQNVATALKLGQARGVVVAACAAHGVPVIDYRPSVIKKALVGTGRAEKEQVGYMVGQVLGVRPDWKLDTGDALAAAICHLNQRRLTRLAGLA.

Residues Asp11, Glu70, and Asp142 contribute to the active site. Positions 11, 70, and 142 each coordinate Mg(2+).

It belongs to the RuvC family. Homodimer which binds Holliday junction (HJ) DNA. The HJ becomes 2-fold symmetrical on binding to RuvC with unstacked arms; it has a different conformation from HJ DNA in complex with RuvA. In the full resolvosome a probable DNA-RuvA(4)-RuvB(12)-RuvC(2) complex forms which resolves the HJ. Mg(2+) serves as cofactor.

Its subcellular location is the cytoplasm. It catalyses the reaction Endonucleolytic cleavage at a junction such as a reciprocal single-stranded crossover between two homologous DNA duplexes (Holliday junction).. In terms of biological role, the RuvA-RuvB-RuvC complex processes Holliday junction (HJ) DNA during genetic recombination and DNA repair. Endonuclease that resolves HJ intermediates. Cleaves cruciform DNA by making single-stranded nicks across the HJ at symmetrical positions within the homologous arms, yielding a 5'-phosphate and a 3'-hydroxyl group; requires a central core of homology in the junction. The consensus cleavage sequence is 5'-(A/T)TT(C/G)-3'. Cleavage occurs on the 3'-side of the TT dinucleotide at the point of strand exchange. HJ branch migration catalyzed by RuvA-RuvB allows RuvC to scan DNA until it finds its consensus sequence, where it cleaves and resolves the cruciform DNA. The sequence is that of Crossover junction endodeoxyribonuclease RuvC from Nitratidesulfovibrio vulgaris (strain ATCC 29579 / DSM 644 / CCUG 34227 / NCIMB 8303 / VKM B-1760 / Hildenborough) (Desulfovibrio vulgaris).